The following is a 370-amino-acid chain: uncharacterized protein (370 aa).

Residues 62 to 293 enclose the OBG-type G domain; the sequence is ATVALVGFPS…LKERMWRALG (232 aa). GTP is bound by residues 68 to 75, 114 to 118, and 243 to 246; these read GFPSVGKS, DVPGL, and NKVD. In terms of domain architecture, TGS spans 293–368; that stretch reads GLIRIYMDKP…EDEDVLRVVA (76 aa).

This sequence belongs to the TRAFAC class OBG-HflX-like GTPase superfamily. OBG GTPase family.

This is an uncharacterized protein from Halobacterium salinarum (strain ATCC 700922 / JCM 11081 / NRC-1) (Halobacterium halobium).